Reading from the N-terminus, the 268-residue chain is Ribosomal RNA large subunit methyltransferase E (268 aa).

Residues 1–60 form a disordered region; sequence MKPPRSRSGSSKDTGPKRIPGKALKSASNPGENDATLDSATARTARNKTVSLRTARGRTT. The segment covering 26–52 has biased composition (polar residues); it reads SASNPGENDATLDSATARTARNKTVSL. 5 residues coordinate S-adenosyl-L-methionine: Gly115, Trp117, Asp133, Asp149, and Asp173. Lys213 acts as the Proton acceptor in catalysis.

The protein belongs to the class I-like SAM-binding methyltransferase superfamily. RNA methyltransferase RlmE family.

The protein localises to the cytoplasm. It carries out the reaction uridine(2552) in 23S rRNA + S-adenosyl-L-methionine = 2'-O-methyluridine(2552) in 23S rRNA + S-adenosyl-L-homocysteine + H(+). In terms of biological role, specifically methylates the uridine in position 2552 of 23S rRNA at the 2'-O position of the ribose in the fully assembled 50S ribosomal subunit. The protein is Ribosomal RNA large subunit methyltransferase E of Gluconobacter oxydans (strain 621H) (Gluconobacter suboxydans).